The following is an 85-amino-acid chain: Selenoprotein W (85 aa).

The cysteinyl-selenocysteine (Cys-Sec); redox-active cross-link spans 10-13; the sequence is CGAU. Sec13 is a non-standard amino acid (selenocysteine).

It belongs to the SelWTH family. Selenoprotein W subfamily. Expressed ubiquitously with predominant expression in the pituitary, spinal cord, sciatic nerve, cerebral cortex, cerebral nuclei, thalamus, cerebellum, muscle, cartilage, trachea, gizzard and artery. Weakly expressed in pancreas, testis, ovary, kidney and veins.

The protein resides in the cytoplasm. Plays a role as a glutathione (GSH)-dependent antioxidant. May be involved in a redox-related process. May play a role in the myopathies of selenium deficiency. The chain is Selenoprotein W from Gallus gallus (Chicken).